The primary structure comprises 542 residues: Neutral amino acid transporter B(0) (542 aa).

Met1 is modified (N-acetylmethionine). Over 1-52 (MVADPPRGDSKGLAAAEPTANGGLALASIEDQGEAAGGCCGSRDRVRRCLRA) the chain is Cytoplasmic. A helical transmembrane segment spans residues 53–82 (NLLVLLTVVAVVVGVALGLGVSGAGGALAL). Residues 83 to 95 (GPERLSAFVFPGE) are Extracellular-facing. Residues 96-117 (LLLRLLRMIILPLVVCSLIGGA) form a helical membrane-spanning segment. The Cytoplasmic portion of the chain corresponds to 118 to 131 (ASLDPGALGRLGAW). Residues 132–154 (ALLFFLVTTLLASALGVALALAL) traverse the membrane as a helical segment. Topologically, residues 155-225 (QPGAASAAIN…GTRVKVPVGQ (71 aa)) are extracellular. 2 N-linked (GlcNAc...) asparagine glycosylation sites follow: Asn164 and Asn213. A helical membrane pass occupies residues 226 to 249 (EVEGMNILGLVVFAIVFGVALRKL). Residues 250–258 (GPEGELLIR) are Cytoplasmic-facing. Residues 259 to 286 (FFNSFNEATMVLVSWIMWYAPVGIMFLV) form a helical membrane-spanning segment. Over 287-307 (AGKIVEMEDVGLLFARLGKYI) the chain is Extracellular. Residues 308 to 329 (LCCLLGHAIHGLLVLPLIYFLF) form a helical membrane-spanning segment. Residues 330–334 (TRKNP) lie on the Cytoplasmic side of the membrane. Residues 335 to 365 (YRFLWGIVTPLATAFGTSSSSATLPLMMKCV) constitute an intramembrane region (discontinuously helical). Residues 366 to 374 (EENNGVAKH) are Cytoplasmic-facing. Residues 375–401 (ISRFILPIGATVNMDGAALFQCVAAVF) form a helical membrane-spanning segment. The Na(+) site is built by Gly383, Thr385, and Asn387. Residues 402–414 (IAQLSEQSLDFVK) lie on the Extracellular side of the membrane. Residues 415-448 (IITILVTATASSVGAAGIPAGGVLTLAIILEAVN) constitute an intramembrane region (discontinuously helical). Over 449 to 461 (LPVDHISLILAVD) the chain is Extracellular. The chain crosses the membrane as a helical span at residues 462–483 (WLVDRSCTVLNVEGDALGAGLL). Positions 472 and 476 each coordinate Na(+). The Cytoplasmic segment spans residues 484-542 (QNYVDRTEVRSTEPELIQVKSELPLDPLPAPTEEGNPLLRHYRGPAGDATVASEKESVM). Ser494 carries the phosphoserine modification. Position 495 is a phosphothreonine (Thr495). Phosphoserine occurs at positions 504, 536, and 540. The interval 509-542 (DPLPAPTEEGNPLLRHYRGPAGDATVASEKESVM) is disordered.

It belongs to the dicarboxylate/amino acid:cation symporter (DAACS) (TC 2.A.23) family. SLC1A5 subfamily. In terms of assembly, homotrimer.

The protein localises to the cell membrane. Its subcellular location is the melanosome. It carries out the reaction L-glutamine(out) + L-serine(in) + Na(+)(out) = L-glutamine(in) + L-serine(out) + Na(+)(in). It catalyses the reaction L-glutamine(in) + L-serine(out) + Na(+)(out) = L-glutamine(out) + L-serine(in) + Na(+)(in). The enzyme catalyses L-threonine(in) + L-glutamine(out) + Na(+)(out) = L-threonine(out) + L-glutamine(in) + Na(+)(in). The catalysed reaction is L-threonine(out) + L-glutamine(in) + Na(+)(out) = L-threonine(in) + L-glutamine(out) + Na(+)(in). It carries out the reaction L-asparagine(in) + L-glutamine(out) + Na(+)(out) = L-asparagine(out) + L-glutamine(in) + Na(+)(in). It catalyses the reaction L-asparagine(out) + L-glutamine(in) + Na(+)(out) = L-asparagine(in) + L-glutamine(out) + Na(+)(in). The enzyme catalyses L-glutamine(in) + L-alanine(out) + Na(+)(out) = L-glutamine(out) + L-alanine(in) + Na(+)(in). The catalysed reaction is L-valine(out) + L-glutamine(in) + Na(+)(out) = L-valine(in) + L-glutamine(out) + Na(+)(in). It carries out the reaction L-glutamine(in) + L-methionine(out) + Na(+)(out) = L-glutamine(out) + L-methionine(in) + Na(+)(in). It catalyses the reaction L-glutamine(in) + L-glutamate(out) + Na(+)(out) + H(+)(out) = L-glutamine(out) + L-glutamate(in) + Na(+)(in) + H(+)(in). The enzyme catalyses D-serine(in) + L-glutamine(out) + Na(+)(out) = D-serine(out) + L-glutamine(in) + Na(+)(in). The catalysed reaction is D-serine(in) + L-alanine(out) + Na(+)(out) = D-serine(out) + L-alanine(in) + Na(+)(in). It carries out the reaction nitrate(in) = nitrate(out). It catalyses the reaction iodide(out) = iodide(in). The enzyme catalyses thiocyanate(in) = thiocyanate(out). Functionally, sodium-coupled antiporter of neutral amino acids. In a tri-substrate transport cycle, exchanges neutral amino acids between the extracellular and intracellular compartments, coupled to the inward cotransport of at least one sodium ion. The preferred substrate is the essential amino acid L-glutamine, a precursor for biosynthesis of proteins, nucleotides and amine sugars as well as an alternative fuel for mitochondrial oxidative phosphorylation. Exchanges L-glutamine with other neutral amino acids such as L-serine, L-threonine and L-asparagine in a bidirectional way. Provides L-glutamine to proliferating stem and activated cells driving the metabolic switch toward cell differentiation. The transport cycle is usually pH-independent, with the exception of L-glutamate. Transports extracellular L-glutamate coupled to the cotransport of one proton and one sodium ion in exchange for intracellular L-glutamine counter-ion. May provide for L-glutamate uptake in glial cells regulating glutamine/glutamate cycle in the nervous system. Can transport D-amino acids. Mediates D-serine release from the retinal glia potentially affecting NMDA receptor function in retinal neurons. Displays sodium- and amino acid-dependent but uncoupled channel-like anion conductance with a preference SCN(-) &gt;&gt; NO3(-) &gt; I(-) &gt; Cl(-). Through binding of the fusogenic protein syncytin-1/ERVW-1 may mediate trophoblasts syncytialization, the spontaneous fusion of their plasma membranes, an essential process in placental development. In Macaca fascicularis (Crab-eating macaque), this protein is Neutral amino acid transporter B(0) (SLC1A5).